The primary structure comprises 188 residues: Ribosome maturation factor RimM (188 aa).

Residues 96 to 169 (DDEFYYADLE…RILIDPMAAG (74 aa)) form the PRC barrel domain.

Belongs to the RimM family. Binds ribosomal protein uS19.

Its subcellular location is the cytoplasm. Its function is as follows. An accessory protein needed during the final step in the assembly of 30S ribosomal subunit, possibly for assembly of the head region. Essential for efficient processing of 16S rRNA. May be needed both before and after RbfA during the maturation of 16S rRNA. It has affinity for free ribosomal 30S subunits but not for 70S ribosomes. The protein is Ribosome maturation factor RimM of Agrobacterium fabrum (strain C58 / ATCC 33970) (Agrobacterium tumefaciens (strain C58)).